Reading from the N-terminus, the 287-residue chain is Protoheme IX farnesyltransferase (287 aa).

8 helical membrane passes run 9-29, 31-51, 94-114, 132-152, 158-178, 202-222, 228-248, and 267-287; these read IVTM…SATL, LIDW…AGAA, IILW…TWLI, VGAI…GGTL, WMLF…IAWL, AWQS…LAWF, VASA…WPLL, and LRWS…RASL.

Belongs to the UbiA prenyltransferase family. Protoheme IX farnesyltransferase subfamily.

Its subcellular location is the cell inner membrane. The enzyme catalyses heme b + (2E,6E)-farnesyl diphosphate + H2O = Fe(II)-heme o + diphosphate. It participates in porphyrin-containing compound metabolism; heme O biosynthesis; heme O from protoheme: step 1/1. Its function is as follows. Converts heme B (protoheme IX) to heme O by substitution of the vinyl group on carbon 2 of heme B porphyrin ring with a hydroxyethyl farnesyl side group. This is Protoheme IX farnesyltransferase from Rhodopirellula baltica (strain DSM 10527 / NCIMB 13988 / SH1).